Consider the following 946-residue polypeptide: Bifunctional glutamine synthetase adenylyltransferase/adenylyl-removing enzyme (946 aa).

The segment at 1-440 (MKPLSSPLQQ…VFNELIGDDE (440 aa)) is adenylyl removase. The adenylyl transferase stretch occupies residues 449–946 (SEQWRELWQD…VSWQKWLVEE (498 aa)).

It belongs to the GlnE family. Requires Mg(2+) as cofactor.

The catalysed reaction is [glutamine synthetase]-O(4)-(5'-adenylyl)-L-tyrosine + phosphate = [glutamine synthetase]-L-tyrosine + ADP. The enzyme catalyses [glutamine synthetase]-L-tyrosine + ATP = [glutamine synthetase]-O(4)-(5'-adenylyl)-L-tyrosine + diphosphate. In terms of biological role, involved in the regulation of glutamine synthetase GlnA, a key enzyme in the process to assimilate ammonia. When cellular nitrogen levels are high, the C-terminal adenylyl transferase (AT) inactivates GlnA by covalent transfer of an adenylyl group from ATP to specific tyrosine residue of GlnA, thus reducing its activity. Conversely, when nitrogen levels are low, the N-terminal adenylyl removase (AR) activates GlnA by removing the adenylyl group by phosphorolysis, increasing its activity. The regulatory region of GlnE binds the signal transduction protein PII (GlnB) which indicates the nitrogen status of the cell. This chain is Bifunctional glutamine synthetase adenylyltransferase/adenylyl-removing enzyme, found in Escherichia coli (strain SMS-3-5 / SECEC).